Here is a 134-residue protein sequence, read N- to C-terminus: Small ribosomal subunit protein uS17c (134 aa).

Residues 1–37 (HHFFTGNGIGLNRFSNPISSPQTQTQTRSLPFPAIKA) constitute a chloroplast transit peptide. The segment at 106-134 (FLAVPAPSRKSKKAGSSGELGIPLQSQQE) is disordered.

It belongs to the universal ribosomal protein uS17 family. As to quaternary structure, part of the 30S ribosomal subunit.

The protein resides in the plastid. It is found in the chloroplast. In terms of biological role, one of the primary rRNA binding proteins, it binds specifically to the 5'-end of 16S ribosomal RNA. The chain is Small ribosomal subunit protein uS17c (RPS17) from Pisum sativum (Garden pea).